The chain runs to 431 residues: 3'3'-cGAMP-specific phosphodiesterase 1 (431 aa).

The 117-residue stretch at 39–155 (DINHGHRVGY…IFLADRVDYL (117 aa)) folds into the HD domain. In terms of domain architecture, HD-GYP spans 231-427 (GVEEIMSIAM…YYQLSIAESP (197 aa)). Residues His288 and Asp289 each coordinate a divalent metal cation. Lys292 acts as the Proton donor in catalysis. 4 residues coordinate a divalent metal cation: His317, His341, His342, and Asp370.

As to quaternary structure, monomer. It depends on Ca(2+) as a cofactor. Requires Mg(2+) as cofactor.

It carries out the reaction 3',3'-cGAMP + H2O = 5'-pApG-3' + H(+). The catalysed reaction is 5'-pApG-3' + H2O = 5'-ApG-3' + phosphate. Functionally, phosphodiesterase (PDE) that catalyzes the hydrolysis of 3'3'-cyclic GMP-AMP (3'3'-cGAMP), leading to linear 5'-pApG. Also displays 5'-nucleotidase activity, further hydrolyzing 5'-pApG to 5'-ApG. Counteracts the function of the 3'3'-cGAMP synthase DncV, and is involved in the modulation of intracellular 3'3'-cGAMP levels. Enhances bacterial chemotaxis and inhibits intestinal colonization in vivo. Thus exerts a crucial role in regulating bacterial infectivity through catalyzing 3'3'-cGAMP degradation. Is specific for 3'3'-cGAMP since it cannot degrade other cGAMP linkage isomers (3'2'-, 2'3'-, and 2'2'-cGAMPs). Is also able to hydrolyze c-di-GMP but not c-di-AMP. The protein is 3'3'-cGAMP-specific phosphodiesterase 1 of Vibrio cholerae serotype O1 (strain ATCC 39315 / El Tor Inaba N16961).